A 114-amino-acid polypeptide reads, in one-letter code: Thioredoxin H1 (114 aa).

Alanine 2 carries the N-acetylalanine modification. A Thioredoxin domain is found at alanine 2–alanine 114. Active-site nucleophile residues include cysteine 40 and cysteine 43. Cysteines 40 and 43 form a disulfide.

Belongs to the thioredoxin family. Plant H-type subfamily. Interacts with FBA6. Interacts with MDH1.

It is found in the cytoplasm. Thiol-disulfide oxidoreductase involved in the redox regulation of a number of cytosolic enzymes. Activates the cytosolic malate dehydrogenase (MDH) probably by reducing an interchain disulfide bond of the inactive MDH homodimer. Possesses insulin disulfide bonds reducing activity. This is Thioredoxin H1 (TRX1) from Arabidopsis thaliana (Mouse-ear cress).